The chain runs to 628 residues: UvrABC system protein C (628 aa).

One can recognise a GIY-YIG domain in the interval 21-100; the sequence is TGPGIYQFKN…IKELKPRYNV (80 aa). One can recognise a UVR domain in the interval 214-249; the sequence is AGLLKELHEKMLTAAAELRFEEAAELKMQLQSLRRY.

This sequence belongs to the UvrC family. In terms of assembly, interacts with UvrB in an incision complex.

The protein localises to the cytoplasm. Its function is as follows. The UvrABC repair system catalyzes the recognition and processing of DNA lesions. UvrC both incises the 5' and 3' sides of the lesion. The N-terminal half is responsible for the 3' incision and the C-terminal half is responsible for the 5' incision. The sequence is that of UvrABC system protein C from Chlorobium luteolum (strain DSM 273 / BCRC 81028 / 2530) (Pelodictyon luteolum).